A 283-amino-acid chain; its full sequence is Thymidylate synthase (283 aa).

Arginine 22 lines the dUMP pocket. Cysteine 160 serves as the catalytic Nucleophile. DUMP contacts are provided by residues 180-183 (RSCD), asparagine 191, and 221-223 (HIY). Aspartate 183 is a (6R)-5,10-methylene-5,6,7,8-tetrahydrofolate binding site. A (6R)-5,10-methylene-5,6,7,8-tetrahydrofolate-binding site is contributed by serine 282.

This sequence belongs to the thymidylate synthase family. Bacterial-type ThyA subfamily. Homodimer.

It localises to the cytoplasm. It carries out the reaction dUMP + (6R)-5,10-methylene-5,6,7,8-tetrahydrofolate = 7,8-dihydrofolate + dTMP. It participates in pyrimidine metabolism; dTTP biosynthesis. Its function is as follows. Catalyzes the reductive methylation of 2'-deoxyuridine-5'-monophosphate (dUMP) to 2'-deoxythymidine-5'-monophosphate (dTMP) while utilizing 5,10-methylenetetrahydrofolate (mTHF) as the methyl donor and reductant in the reaction, yielding dihydrofolate (DHF) as a by-product. This enzymatic reaction provides an intracellular de novo source of dTMP, an essential precursor for DNA biosynthesis. The polypeptide is Thymidylate synthase (Psychromonas ingrahamii (strain DSM 17664 / CCUG 51855 / 37)).